A 235-amino-acid chain; its full sequence is Elongation factor Tu, chloroplastic (235 aa).

Positions 1 to 125 constitute a tr-type G domain; it reads KNMITGAAQM…AVDSYIPTPE (125 aa). Residue 47–50 participates in GTP binding; that stretch reads NKED.

The protein belongs to the TRAFAC class translation factor GTPase superfamily. Classic translation factor GTPase family. EF-Tu/EF-1A subfamily.

Its subcellular location is the plastid. The protein resides in the chloroplast. It catalyses the reaction GTP + H2O = GDP + phosphate + H(+). Its function is as follows. GTP hydrolase that promotes the GTP-dependent binding of aminoacyl-tRNA to the A-site of ribosomes during protein biosynthesis. In Mantoniella squamata (Unicellular alga), this protein is Elongation factor Tu, chloroplastic (tufA).